A 165-amino-acid polypeptide reads, in one-letter code: Lipoprotein signal peptidase (165 aa).

4 consecutive transmembrane segments (helical) span residues 7–27, 28–48, 61–81, and 87–107; these read FFLL…KYWI, THTM…LYHV, FSHW…FWLW, and DKAL…GNLI. Active-site residues include Asp117 and Asp136. Residues 128–148 traverse the membrane as a helical segment; it reads SFAIFNLADTFITLGAISILI.

Belongs to the peptidase A8 family.

The protein resides in the cell inner membrane. It carries out the reaction Release of signal peptides from bacterial membrane prolipoproteins. Hydrolyzes -Xaa-Yaa-Zaa-|-(S,diacylglyceryl)Cys-, in which Xaa is hydrophobic (preferably Leu), and Yaa (Ala or Ser) and Zaa (Gly or Ala) have small, neutral side chains.. The protein operates within protein modification; lipoprotein biosynthesis (signal peptide cleavage). Its function is as follows. This protein specifically catalyzes the removal of signal peptides from prolipoproteins. This is Lipoprotein signal peptidase from Bartonella bacilliformis (strain ATCC 35685 / KC583 / Herrer 020/F12,63).